Consider the following 170-residue polypeptide: MKLHDLRPAEGAHRKRKRIGRGHGSGKGKTGGKGMMGQKARSGPGPYRTFEGGQNRLVKRMPFKRGFVNKFRVEYEVVNVGSLVDWPVDLEVTPETLLARRLVRRKRMPVKILGDGELTQPLVIKAHKFSASARQKIEAAGGKAIDLTWVVERHSRSRGPNPSMRNARQS.

Positions 1 to 12 are enriched in basic and acidic residues; it reads MKLHDLRPAEGA. The segment at 1–52 is disordered; that stretch reads MKLHDLRPAEGAHRKRKRIGRGHGSGKGKTGGKGMMGQKARSGPGPYRTFEG. The segment covering 13–26 has biased composition (basic residues); it reads HRKRKRIGRGHGSG.

The protein belongs to the universal ribosomal protein uL15 family. As to quaternary structure, part of the 50S ribosomal subunit.

In terms of biological role, binds to the 23S rRNA. This Chloroflexus aurantiacus (strain ATCC 29366 / DSM 635 / J-10-fl) protein is Large ribosomal subunit protein uL15.